The sequence spans 1165 residues: MDSIIGRSQFVSETANLFTDEKTATARAKVVDWCNELVIASPSTKCELLAKVQETVLGSCAELAEEFLESVLSLAHDSNMEVRKQVVAFVEQVCKVKVELLPHVINVVSMLLRDNSAQVIKRVIQACGSIYKNGLQYLCSLMEPGDSAEQAWNILSLIKAQILDMIDNENDGIRTNAIKFLEGVVVLQSFADEDSLKRDGDFSLADVPDHCTLFRREKLQEEGNNILDILLQFHGTTHISSVNLIACTSSLCTIAKMRPIFMGAVVEAFKQLNANLPPTLTDSQVSSVRKSLKMQLQTLLKNRGAFEFASTIRGMLVDLGSSTNEIQKLIPKMDKQEMARRQKRILENAAQSLAKRARLACEQQDQQQREMELDTEELERQKQKSTRVNEKFLAEHFRNPETVVTLVLEFLPSLPTEVPQKFLQEYTPIREMSIQQQVTNISRFFGEQLSEKRLGPGAATFSREPPMRVKKVQAIESTLTAMEVDEDAVQKLSEEEFQRKEEATKKLRETMERAKGEQTVIEKMKERAKTLKLQEITKPLPRNLKEKFLTDAVRRILNSERQCIKGGVSSKRRKLVTVIAATFPDNVRYGIMEFILEDIKQRIDLAFSWLFEEYSLLQGFTRHTYVKTENRPDHAYNELLNKLIFGIGERCDHKDKIILIRRVYLEAPILPEVSIGHLVQLSLDDEFSQHGLELIKDLAVLRPPRKNRFVRVLLNFSVHERLDLRDLAQAHLVSLYHVHKILPARIDEFALEWLKFIEQESPPAAVFSQDFGRPTEEPDWREDTTKVCFGLAFTLLPYKPEVYLQQICQVFVSTSAELKRTILRSLDIPIKKMGVESPTLLQLIEDCPKGMETLVIRIIYILTERVPSPHEELVRRVRDLYQNKVKDVRVMIPVLSGLTRSELISVLPKLIKLNPAVVKEVFNRLLGIGAEFAHQTMAMTPTDILVALHTIDTSVCDIKAIVKATSLCLAERDLYTQEVLMAVLQQLVEVTPLPTLMMRTTIQSLTLYPRLANFVMNLLQRLIIKQVWRQKVIWEGFLKTVQRLKPQSMPILLHLPPAQLVDALQQCPDLRPALSEYAESMQDEPMNGSGITQQVLDIISGKSVDVFVTDESGGYISAEHIKKEAPDPSEISVISTVPVLTSLVPLPVPPPIGSDLNQPLPPGED.

HEAT repeat units lie at residues 23 to 58 (TATA…TVLG), 61 to 95 (AELA…QVCK), 98 to 140 (VELL…YLCS), 147 to 186 (SAEQ…GVVV), and 218 to 257 (KLQE…IAKM). Positions 365 to 384 (DQQQREMELDTEELERQKQK) are disordered. Residues 367-384 (QQREMELDTEELERQKQK) show a composition bias toward basic and acidic residues.

It belongs to the Symplekin family. In terms of assembly, interacts with Cpsf73 and Cpsf100 forming a core cleavage factor required for both polyadenylated and histone mRNA processing. Interacts with Slbp and Lsm11.

The protein localises to the nucleus. In terms of biological role, component of a protein complex required for cotranscriptional processing of 3'-ends of polyadenylated and histone pre-mRNA. Involved in germline stem cell transit amplification, differentiation and mitosis-to-meiosis transition. The polypeptide is Symplekin (Drosophila melanogaster (Fruit fly)).